Consider the following 56-residue polypeptide: Large ribosomal subunit protein eL20 (56 aa).

The segment at 1–24 (MSTYTVRGSFPARDGPQQFEKEVE) is disordered.

The protein belongs to the eukaryotic ribosomal protein eL20 family. As to quaternary structure, part of the 50S ribosomal subunit. Binds 23S rRNA.

The chain is Large ribosomal subunit protein eL20 from Haloarcula marismortui (strain ATCC 43049 / DSM 3752 / JCM 8966 / VKM B-1809) (Halobacterium marismortui).